We begin with the raw amino-acid sequence, 197 residues long: Small ribosomal subunit protein uS7 (197 aa).

This sequence belongs to the universal ribosomal protein uS7 family. In terms of assembly, part of the 30S ribosomal subunit.

One of the primary rRNA binding proteins, it binds directly to 16S rRNA where it nucleates assembly of the head domain of the 30S subunit. Is located at the subunit interface close to the decoding center. In Methanopyrus kandleri (strain AV19 / DSM 6324 / JCM 9639 / NBRC 100938), this protein is Small ribosomal subunit protein uS7.